Here is a 370-residue protein sequence, read N- to C-terminus: Phospho-N-acetylmuramoyl-pentapeptide-transferase (370 aa).

10 consecutive transmembrane segments (helical) span residues 3 to 23, 54 to 74, 79 to 99, 118 to 138, 161 to 181, 197 to 217, 238 to 258, 262 to 282, 290 to 310, and 341 to 361; these read QIII…PVLI, GLAI…YGLL, AFTA…AVGF, AKLI…LRFP, LAVG…YILI, LAAG…FWQF, LAVL…WNAA, IFMG…ISVT, IIIG…IVVF, and FWLL…GDWL.

Belongs to the glycosyltransferase 4 family. MraY subfamily. Mg(2+) is required as a cofactor.

The protein resides in the cell membrane. The enzyme catalyses UDP-N-acetyl-alpha-D-muramoyl-L-alanyl-gamma-D-glutamyl-meso-2,6-diaminopimeloyl-D-alanyl-D-alanine + di-trans,octa-cis-undecaprenyl phosphate = di-trans,octa-cis-undecaprenyl diphospho-N-acetyl-alpha-D-muramoyl-L-alanyl-D-glutamyl-meso-2,6-diaminopimeloyl-D-alanyl-D-alanine + UMP. It functions in the pathway cell wall biogenesis; peptidoglycan biosynthesis. Catalyzes the initial step of the lipid cycle reactions in the biosynthesis of the cell wall peptidoglycan: transfers peptidoglycan precursor phospho-MurNAc-pentapeptide from UDP-MurNAc-pentapeptide onto the lipid carrier undecaprenyl phosphate, yielding undecaprenyl-pyrophosphoryl-MurNAc-pentapeptide, known as lipid I. The chain is Phospho-N-acetylmuramoyl-pentapeptide-transferase from Corynebacterium aurimucosum (strain ATCC 700975 / DSM 44827 / CIP 107346 / CN-1) (Corynebacterium nigricans).